The chain runs to 251 residues: Hydroxyacylglutathione hydrolase (251 aa).

Residues His-53, His-55, Asp-57, His-58, His-110, Asp-127, and His-165 each contribute to the Zn(2+) site.

The protein belongs to the metallo-beta-lactamase superfamily. Glyoxalase II family. Monomer. It depends on Zn(2+) as a cofactor.

The catalysed reaction is an S-(2-hydroxyacyl)glutathione + H2O = a 2-hydroxy carboxylate + glutathione + H(+). It participates in secondary metabolite metabolism; methylglyoxal degradation; (R)-lactate from methylglyoxal: step 2/2. Thiolesterase that catalyzes the hydrolysis of S-D-lactoyl-glutathione to form glutathione and D-lactic acid. The protein is Hydroxyacylglutathione hydrolase of Cronobacter sakazakii (strain ATCC BAA-894) (Enterobacter sakazakii).